We begin with the raw amino-acid sequence, 244 residues long: Small ribosomal subunit protein uS2 (244 aa).

The protein belongs to the universal ribosomal protein uS2 family.

This Halalkalibacterium halodurans (strain ATCC BAA-125 / DSM 18197 / FERM 7344 / JCM 9153 / C-125) (Bacillus halodurans) protein is Small ribosomal subunit protein uS2.